The following is a 100-amino-acid chain: Urease subunit gamma (100 aa).

Belongs to the urease gamma subunit family. In terms of assembly, heterotrimer of UreA (gamma), UreB (beta) and UreC (alpha) subunits. Three heterotrimers associate to form the active enzyme.

The protein localises to the cytoplasm. It carries out the reaction urea + 2 H2O + H(+) = hydrogencarbonate + 2 NH4(+). It participates in nitrogen metabolism; urea degradation; CO(2) and NH(3) from urea (urease route): step 1/1. The protein is Urease subunit gamma of Thermosynechococcus vestitus (strain NIES-2133 / IAM M-273 / BP-1).